The primary structure comprises 153 residues: uncharacterized protein (153 aa).

Residues 1 to 21 (MKITITSLLFFLVMIVELASA) form the signal peptide.

This is an uncharacterized protein from Saccharomyces cerevisiae (strain ATCC 204508 / S288c) (Baker's yeast).